Here is a 358-residue protein sequence, read N- to C-terminus: Phospho-N-acetylmuramoyl-pentapeptide-transferase (358 aa).

10 helical membrane passes run 25-45 (RTIY…PWVI), 73-93 (TMGG…WADL), 97-117 (YVWT…TDDY), 134-154 (MFWQ…VAGM), 172-192 (YLYI…VNLT), 197-217 (GLAI…AYIA), 233-253 (GAGE…GFLW), 261-281 (VFMG…LAVI), 286-306 (MLLV…IFQV), and 335-355 (KIIV…ISTL).

This sequence belongs to the glycosyltransferase 4 family. MraY subfamily. The cofactor is Mg(2+).

Its subcellular location is the cell inner membrane. It carries out the reaction UDP-N-acetyl-alpha-D-muramoyl-L-alanyl-gamma-D-glutamyl-meso-2,6-diaminopimeloyl-D-alanyl-D-alanine + di-trans,octa-cis-undecaprenyl phosphate = di-trans,octa-cis-undecaprenyl diphospho-N-acetyl-alpha-D-muramoyl-L-alanyl-D-glutamyl-meso-2,6-diaminopimeloyl-D-alanyl-D-alanine + UMP. It functions in the pathway cell wall biogenesis; peptidoglycan biosynthesis. Functionally, catalyzes the initial step of the lipid cycle reactions in the biosynthesis of the cell wall peptidoglycan: transfers peptidoglycan precursor phospho-MurNAc-pentapeptide from UDP-MurNAc-pentapeptide onto the lipid carrier undecaprenyl phosphate, yielding undecaprenyl-pyrophosphoryl-MurNAc-pentapeptide, known as lipid I. In Geobacter sulfurreducens (strain ATCC 51573 / DSM 12127 / PCA), this protein is Phospho-N-acetylmuramoyl-pentapeptide-transferase.